A 487-amino-acid chain; its full sequence is WD-40 repeat-containing protein MSI5 (487 aa).

An N-acetylmethionine modification is found at M1. Residues 1 to 12 (MESEAAATVQAT) are compositionally biased toward low complexity. The segment at 1–44 (MESEAAATVQATRPRRAPRTPVTAILTDKRRRKPKSNNESQLPF) is disordered. The short motif at 14 to 21 (PRRAPRTP) is the Nuclear localization signal element. WD repeat units lie at residues 142–182 (IHPG…DRYA), 197–237 (GHQD…TMAG), 270–310 (GHKD…SPAM), 315–355 (AHDA…SNGV), 364–404 (GHRA…KKSE), and 419–466 (GHRD…YRPE). The interval 236–268 (AGSDSKSPGSSFKQTGEGSDKTGGPSVGPRGIY) is disordered. Over residues 237–252 (GSDSKSPGSSFKQTGE) the composition is skewed to polar residues. Positions 288–303 (FCSVGDDSCLMLWDAR) match the DWD box motif.

It belongs to the WD repeat RBAP46/RBAP48/MSI1 family. Interacts with AHL16. Interacts with LHP1, PDP2, PDP3 and PDP6. Component of the PRC2 (polycomb repressive complex 2) complex which regulates histone methylation on histone H3K27.

It localises to the nucleus. Functionally, core histone-binding subunit that may target chromatin assembly factors, chromatin remodeling factors and histone deacetylases to their histone substrates in a manner that is regulated by nucleosomal DNA. Acts together with PDP1 and MSI4/FVE to regulate the function of the PRC2 complex on FLC. The polypeptide is WD-40 repeat-containing protein MSI5 (Arabidopsis thaliana (Mouse-ear cress)).